The primary structure comprises 331 residues: 6-phosphogluconolactonase (331 aa).

N6-acetyllysine is present on K287.

This sequence belongs to the cycloisomerase 2 family.

It carries out the reaction 6-phospho-D-glucono-1,5-lactone + H2O = 6-phospho-D-gluconate + H(+). The protein operates within carbohydrate degradation; pentose phosphate pathway; D-ribulose 5-phosphate from D-glucose 6-phosphate (oxidative stage): step 2/3. Functionally, catalyzes the hydrolysis of 6-phosphogluconolactone to 6-phosphogluconate. The protein is 6-phosphogluconolactonase of Escherichia coli (strain SMS-3-5 / SECEC).